A 259-amino-acid polypeptide reads, in one-letter code: Exosome complex component Rrp42 (259 aa).

The protein belongs to the RNase PH family. Rrp42 subfamily. In terms of assembly, component of the archaeal exosome complex. Forms a hexameric ring-like arrangement composed of 3 Rrp41-Rrp42 heterodimers. The hexameric ring associates with a trimer of Rrp4 and/or Csl4 subunits.

It is found in the cytoplasm. Non-catalytic component of the exosome, which is a complex involved in RNA degradation. Contributes to the structuring of the Rrp41 active site. In Archaeoglobus fulgidus (strain ATCC 49558 / DSM 4304 / JCM 9628 / NBRC 100126 / VC-16), this protein is Exosome complex component Rrp42.